Reading from the N-terminus, the 184-residue chain is ATP-dependent protease subunit HslV (184 aa).

Threonine 12 is a catalytic residue. Na(+) is bound by residues alanine 167, cysteine 170, and threonine 173.

Belongs to the peptidase T1B family. HslV subfamily. In terms of assembly, a double ring-shaped homohexamer of HslV is capped on each side by a ring-shaped HslU homohexamer. The assembly of the HslU/HslV complex is dependent on binding of ATP.

Its subcellular location is the cytoplasm. The enzyme catalyses ATP-dependent cleavage of peptide bonds with broad specificity.. Allosterically activated by HslU binding. Functionally, protease subunit of a proteasome-like degradation complex believed to be a general protein degrading machinery. In Wolbachia pipientis subsp. Culex pipiens (strain wPip), this protein is ATP-dependent protease subunit HslV.